A 143-amino-acid polypeptide reads, in one-letter code: Large ribosomal subunit protein uL13 (143 aa).

This sequence belongs to the universal ribosomal protein uL13 family. As to quaternary structure, part of the 50S ribosomal subunit.

Functionally, this protein is one of the early assembly proteins of the 50S ribosomal subunit, although it is not seen to bind rRNA by itself. It is important during the early stages of 50S assembly. In Finegoldia magna (strain ATCC 29328 / DSM 20472 / WAL 2508) (Peptostreptococcus magnus), this protein is Large ribosomal subunit protein uL13.